Reading from the N-terminus, the 671-residue chain is DNA ligase (671 aa).

NAD(+)-binding positions include 32 to 36 (DAEYD), 81 to 82 (SL), and E113. K115 (N6-AMP-lysine intermediate) is an active-site residue. Positions 136, 173, 290, and 314 each coordinate NAD(+). 4 residues coordinate Zn(2+): C408, C411, C426, and C432. The 79-residue stretch at 593–671 (EIDSPFAGKT…EAEMLRLLGS (79 aa)) folds into the BRCT domain.

It belongs to the NAD-dependent DNA ligase family. LigA subfamily. The cofactor is Mg(2+). Mn(2+) serves as cofactor.

It catalyses the reaction NAD(+) + (deoxyribonucleotide)n-3'-hydroxyl + 5'-phospho-(deoxyribonucleotide)m = (deoxyribonucleotide)n+m + AMP + beta-nicotinamide D-nucleotide.. DNA ligase that catalyzes the formation of phosphodiester linkages between 5'-phosphoryl and 3'-hydroxyl groups in double-stranded DNA using NAD as a coenzyme and as the energy source for the reaction. It is essential for DNA replication and repair of damaged DNA. The polypeptide is DNA ligase (Shigella sonnei (strain Ss046)).